Here is a 432-residue protein sequence, read N- to C-terminus: Glutamyl-tRNA reductase (432 aa).

Residues 49–52 (TCNR), Ser107, 112–114 (ETQ), and Gln118 each bind substrate. Cys50 serves as the catalytic Nucleophile. Residue 186–191 (GAGEMG) participates in NADP(+) binding.

The protein belongs to the glutamyl-tRNA reductase family. As to quaternary structure, homodimer.

It carries out the reaction (S)-4-amino-5-oxopentanoate + tRNA(Glu) + NADP(+) = L-glutamyl-tRNA(Glu) + NADPH + H(+). Its pathway is porphyrin-containing compound metabolism; protoporphyrin-IX biosynthesis; 5-aminolevulinate from L-glutamyl-tRNA(Glu): step 1/2. Its function is as follows. Catalyzes the NADPH-dependent reduction of glutamyl-tRNA(Glu) to glutamate 1-semialdehyde (GSA). This Campylobacter jejuni subsp. doylei (strain ATCC BAA-1458 / RM4099 / 269.97) protein is Glutamyl-tRNA reductase.